Reading from the N-terminus, the 216-residue chain is Octanoyltransferase (216 aa).

Residues 32–207 (PDSQDEIWLV…QLVKHLDYAE (176 aa)) enclose the BPL/LPL catalytic domain. Residues 71-78 (RGGQVTYH), 138-140 (SLG), and 151-153 (GLA) contribute to the substrate site. C169 acts as the Acyl-thioester intermediate in catalysis.

This sequence belongs to the LipB family.

Its subcellular location is the cytoplasm. It carries out the reaction octanoyl-[ACP] + L-lysyl-[protein] = N(6)-octanoyl-L-lysyl-[protein] + holo-[ACP] + H(+). It participates in protein modification; protein lipoylation via endogenous pathway; protein N(6)-(lipoyl)lysine from octanoyl-[acyl-carrier-protein]: step 1/2. Catalyzes the transfer of endogenously produced octanoic acid from octanoyl-acyl-carrier-protein onto the lipoyl domains of lipoate-dependent enzymes. Lipoyl-ACP can also act as a substrate although octanoyl-ACP is likely to be the physiological substrate. The sequence is that of Octanoyltransferase from Pseudomonas putida (strain ATCC 47054 / DSM 6125 / CFBP 8728 / NCIMB 11950 / KT2440).